The primary structure comprises 162 residues: Peptidyl-prolyl cis-trans isomerase (162 aa).

Residues 5 to 161 form the PPIase cyclophilin-type domain; it reads FFDVQFGGDA…TTIKIVDSGV (157 aa).

The protein belongs to the cyclophilin-type PPIase family. PPIase A subfamily.

It carries out the reaction [protein]-peptidylproline (omega=180) = [protein]-peptidylproline (omega=0). Its activity is regulated as follows. Binds cyclosporin A (CsA). CsA mediates some of its effects via an inhibitory action on PPIase. Its function is as follows. PPIases accelerate the folding of proteins. It catalyzes the cis-trans isomerization of proline imidic peptide bonds in oligopeptides. The sequence is that of Peptidyl-prolyl cis-trans isomerase from Paramecium primaurelia.